The sequence spans 975 residues: Glycine dehydrogenase (decarboxylating) (975 aa).

Lys723 bears the N6-(pyridoxal phosphate)lysine mark.

It belongs to the GcvP family. In terms of assembly, the glycine cleavage system is composed of four proteins: P, T, L and H. Pyridoxal 5'-phosphate serves as cofactor.

The enzyme catalyses N(6)-[(R)-lipoyl]-L-lysyl-[glycine-cleavage complex H protein] + glycine + H(+) = N(6)-[(R)-S(8)-aminomethyldihydrolipoyl]-L-lysyl-[glycine-cleavage complex H protein] + CO2. Functionally, the glycine cleavage system catalyzes the degradation of glycine. The P protein binds the alpha-amino group of glycine through its pyridoxal phosphate cofactor; CO(2) is released and the remaining methylamine moiety is then transferred to the lipoamide cofactor of the H protein. The sequence is that of Glycine dehydrogenase (decarboxylating) from Burkholderia ambifaria (strain MC40-6).